The chain runs to 1357 residues: Mediator of RNA polymerase II transcription subunit 13 (1357 aa).

2 disordered regions span residues 356-391 (SCNY…GNGF) and 420-487 (DLWN…HRKE). Positions 435–451 (INPTSQQGDSARITSGS) are enriched in polar residues.

The protein belongs to the Mediator complex subunit 13 family. In terms of assembly, component of the SRB8-11 complex, which itself associates with the Mediator complex.

The protein resides in the nucleus. In terms of biological role, component of the SRB8-11 complex. The SRB8-11 complex is a regulatory module of the Mediator complex which is itself involved in regulation of basal and activated RNA polymerase II-dependent transcription. The SRB8-11 complex may be involved in the transcriptional repression of a subset of genes regulated by Mediator. It may inhibit the association of the Mediator complex with RNA polymerase II to form the holoenzyme complex. This Eremothecium gossypii (strain ATCC 10895 / CBS 109.51 / FGSC 9923 / NRRL Y-1056) (Yeast) protein is Mediator of RNA polymerase II transcription subunit 13 (SSN2).